Consider the following 307-residue polypeptide: tRNA dimethylallyltransferase (307 aa).

Residue 16 to 23 participates in ATP binding; sequence GCTAVGKT. 18–23 is a substrate binding site; sequence TAVGKT. The interaction with substrate tRNA stretch occupies residues 41–44; sequence DSLL.

This sequence belongs to the IPP transferase family. Monomer. Requires Mg(2+) as cofactor.

The catalysed reaction is adenosine(37) in tRNA + dimethylallyl diphosphate = N(6)-dimethylallyladenosine(37) in tRNA + diphosphate. Its function is as follows. Catalyzes the transfer of a dimethylallyl group onto the adenine at position 37 in tRNAs that read codons beginning with uridine, leading to the formation of N6-(dimethylallyl)adenosine (i(6)A). In Opitutus terrae (strain DSM 11246 / JCM 15787 / PB90-1), this protein is tRNA dimethylallyltransferase.